A 182-amino-acid chain; its full sequence is Signal peptidase I (182 aa).

Residues 1 to 13 (MTKQKEKRGRRWP) lie on the Cytoplasmic side of the membrane. The chain crosses the membrane as a helical span at residues 14-30 (WFVAVCVVATLRLFVFS). Topologically, residues 31–182 (NYVVEGKSMM…WPFKQFAFQF (152 aa)) are extracellular. Catalysis depends on residues S38 and K79.

This sequence belongs to the peptidase S26 family.

It localises to the cell membrane. The catalysed reaction is Cleavage of hydrophobic, N-terminal signal or leader sequences from secreted and periplasmic proteins.. The chain is Signal peptidase I (lepB) from Bacillus caldolyticus.